A 189-amino-acid polypeptide reads, in one-letter code: GTPase HRas (189 aa).

N-acetylmethionine; in GTPase HRas; alternate is present on methionine 1. Threonine 2 is subject to N-acetylthreonine; in GTPase HRas, N-terminally processed. GTP is bound by residues 13–18 (GVGKSA), 29–35 (VDEYDPT), 59–60 (AG), 116–119 (NKCD), and 145–147 (SAK). Residues 32–40 (YDPTIEDSY) carry the Effector region motif. The (Microbial infection) O-linked (Glc) threonine; by P.sordellii toxin TcsL glycan is linked to threonine 35. An S-nitrosocysteine modification is found at cysteine 118. Residues 166-185 (HKLRKLNPPDESGPGCMSCK) form a hypervariable region region. A Glycyl lysine isopeptide (Lys-Gly) (interchain with G-Cter in ubiquitin) cross-link involves residue lysine 170. Cysteine 181 carries S-palmitoyl cysteine lipidation. Cysteine 184 is lipidated: S-(15-deoxy-Delta12,14-prostaglandin J2-9-yl)cysteine; alternate. Cysteine 184 carries the S-palmitoyl cysteine; alternate lipid modification. Cysteine 186 bears the Cysteine methyl ester mark. A lipid anchor (S-farnesyl cysteine) is attached at cysteine 186. The propeptide at 187 to 189 (VLS) is removed in mature form.

It belongs to the small GTPase superfamily. Ras family. In its GTP-bound form interacts with PLCE1. Interacts with TBC1D10C. Interacts with RGL3. Interacts with HSPD1. Found in a complex with at least BRAF, HRAS, MAP2K1, MAPK3 and RGS14. Interacts (active GTP-bound form) with RGS14 (via RBD 1 domain). Forms a signaling complex with RASGRP1 and DGKZ. Interacts with RASSF5. Interacts with PDE6D. Interacts with IKZF3. Interacts with RACK1. Interacts with PIK3CG; the interaction is required for membrane recruitment and beta-gamma G protein dimer-dependent activation of the PI3K gamma complex PIK3CG:PIK3R6. Interacts with RAPGEF2. Interacts (active GTP-bound form) with both SHOC2 and PP1c (all isoforms) to form a tertiary complex; SHOC2 and PP1c preferably bind M-Ras/MRAS, but they also bind K-Ras/KRAS, N-Ras/NRAS and H-Ras/HRAS. Interacts (GTP-bound form) with MAPKAP1/SIN1; inhibiting H-Ras/HRAS activity. In terms of processing, palmitoylated by the ZDHHC9-GOLGA7 complex. A continuous cycle of de- and re-palmitoylation regulates rapid exchange between plasma membrane and Golgi. S-nitrosylated; critical for redox regulation. Important for stimulating guanine nucleotide exchange. No structural perturbation on nitrosylation. Post-translationally, the covalent modification of cysteine by 15-deoxy-Delta12,14-prostaglandin-J2 is autocatalytic and reversible. It may occur as an alternative to other cysteine modifications, such as S-nitrosylation and S-palmitoylation. In terms of processing, acetylation at Lys-104 prevents interaction with guanine nucleotide exchange factors (GEFs). Fatty-acylated at Lys-170. Post-translationally, ubiquitinated by the BCR(LZTR1) E3 ubiquitin ligase complex at Lys-170 in a non-degradative manner, leading to inhibit Ras signaling by decreasing Ras association with membranes. In terms of processing, (Microbial infection) Glucosylated at Thr-35 by P.sordellii toxin TcsL. Monoglucosylation completely prevents the recognition of the downstream effector, blocking the GTPases in their inactive form, leading to inhibit Ras signaling. In terms of tissue distribution, widely expressed.

The protein resides in the cell membrane. It localises to the golgi apparatus. The protein localises to the golgi apparatus membrane. Its subcellular location is the nucleus. It is found in the cytoplasm. The protein resides in the perinuclear region. It catalyses the reaction GTP + H2O = GDP + phosphate + H(+). Alternates between an inactive form bound to GDP and an active form bound to GTP. Activated by a guanine nucleotide-exchange factor (GEF) and inactivated by a GTPase-activating protein (GAP). In terms of biological role, involved in the activation of Ras protein signal transduction. Ras proteins bind GDP/GTP and possess intrinsic GTPase activity. This Homo sapiens (Human) protein is GTPase HRas (HRAS).